Here is a 416-residue protein sequence, read N- to C-terminus: Tyrosine--tRNA ligase (416 aa).

Position 40 (tyrosine 40) interacts with L-tyrosine. The short motif at 45-54 (ATAASLHVGH) is the 'HIGH' region element. Residues tyrosine 177 and glutamine 181 each contribute to the L-tyrosine site. The short motif at 237-241 (KMGKS) is the 'KMSKS' region element. Lysine 240 is an ATP binding site. Residues 351–416 (LSVTHFLVAA…RKKHKLVRLA (66 aa)) form the S4 RNA-binding domain.

Belongs to the class-I aminoacyl-tRNA synthetase family. TyrS type 1 subfamily. Homodimer.

The protein localises to the cytoplasm. It catalyses the reaction tRNA(Tyr) + L-tyrosine + ATP = L-tyrosyl-tRNA(Tyr) + AMP + diphosphate + H(+). Catalyzes the attachment of tyrosine to tRNA(Tyr) in a two-step reaction: tyrosine is first activated by ATP to form Tyr-AMP and then transferred to the acceptor end of tRNA(Tyr). The sequence is that of Tyrosine--tRNA ligase from Cereibacter sphaeroides (strain ATCC 17025 / ATH 2.4.3) (Rhodobacter sphaeroides).